The primary structure comprises 161 residues: Glutaredoxin-2, mitochondrial (161 aa).

The transit peptide at 1-19 (MLWRRAALAGTRLVWSRSG) directs the protein to the mitochondrion. Ser-20 bears the Phosphoserine mark. The Glutaredoxin domain occupies 54–154 (VNQIQETISD…PLVHQCYLKK (101 aa)). Cys-65 contacts [2Fe-2S] cluster. Glutathione is bound at residue Lys-71. Cys-74 is subject to S-glutathionyl cysteine; alternate. The cysteines at positions 74 and 77 are disulfide-linked. 2 residues coordinate glutathione: Gln-106 and Val-118. Cys-150 contacts [2Fe-2S] cluster.

It belongs to the glutaredoxin family. In terms of assembly, monomer; active form. Homodimer; inactive form. The homodimer is probably linked by 1 2Fe-2S cluster.

Its subcellular location is the mitochondrion. The 2Fe-2S present in the homodimer leads to inactivation of the enzyme. The 2Fe-2S may serve as a redox sensor: the presence of one-electron oxidants or reductants leading to the loss of the 2Fe-2S cluster, subsequent monomerization and activation of the enzyme. Its function is as follows. Glutathione-dependent oxidoreductase that facilitates the maintenance of mitochondrial redox homeostasis upon induction of apoptosis by oxidative stress. Involved in response to hydrogen peroxide and regulation of apoptosis caused by oxidative stress. Acts as a very efficient catalyst of monothiol reactions because of its high affinity for protein glutathione-mixed disulfides. Can receive electrons not only from glutathione (GSH), but also from thioredoxin reductase supporting both monothiol and dithiol reactions. Efficiently catalyzes both glutathionylation and deglutathionylation of mitochondrial complex I, which in turn regulates the superoxide production by the complex. Overexpression decreases the susceptibility to apoptosis and prevents loss of cardiolipin and cytochrome c release. The sequence is that of Glutaredoxin-2, mitochondrial (GLRX2) from Pongo abelii (Sumatran orangutan).